The sequence spans 385 residues: MHPKSQSKQLFRQKYQKSPTLNVYAPGRVNIIGEHTDYNDGFVMPCAINYGTAISGAKRDDHRFNVYAADLDEFDEFRLDQPIIPNPSKKWTGYVRGVVKFVQERCPEFRQGADLVISGDVPLSSGLSSSASLEVAVGKFCQLLGDLPLNNTDIALIGQKAENRFVGANCGNMDQLISALGQADHLLMIDCRSLETVPTPVPEDIAVMIVNSHVKHDLVTGEYNTRRQQCETAAKFFGVKALRDVSIEQFQKREAELTALDPDTAKRARHIVTENQRVLDAAYALNHSDISRLGELMNASHVSMRDDFEITTPEIDYLVELAQSVIGKSGGARMTGGGFGGCIVGLAPKDKVDAVRQIIAENYEKRTGLKESFYVCTASQGVHQC.

Residue 34-37 coordinates substrate; it reads EHTD. An ATP-binding site is contributed by 124 to 130; it reads SSGLSSS. Positions 130 and 162 each coordinate Mg(2+). Asp-174 serves as the catalytic Proton acceptor. Tyr-223 serves as a coordination point for substrate.

It belongs to the GHMP kinase family. GalK subfamily.

The protein resides in the cytoplasm. The enzyme catalyses alpha-D-galactose + ATP = alpha-D-galactose 1-phosphate + ADP + H(+). Its pathway is carbohydrate metabolism; galactose metabolism. Functionally, catalyzes the transfer of the gamma-phosphate of ATP to D-galactose to form alpha-D-galactose-1-phosphate (Gal-1-P). The protein is Galactokinase of Actinobacillus succinogenes (strain ATCC 55618 / DSM 22257 / CCUG 43843 / 130Z).